A 990-amino-acid polypeptide reads, in one-letter code: Fibronectin-binding protein A (990 aa).

An N-terminal signal peptide occupies residues 1–35; the sequence is MKNNLRYGIRKHKLGAASVFLGTMIVVGMGQDKEA. A YSIRK-G/S signaling motif motif is present at residues 7–18; it reads YGIRKHKLGAAS. 2 disordered regions span residues 33–61 and 96–193; these read KEAATSEQKTTTVEENGNSATDNKVSETQ and PKAV…TEVK. Polar residues predominate over residues 37 to 55; that stretch reads TSEQKTTTVEENGNSATDN. A ligand-binding A region region spans residues 37–511; it reads TSEQKTTTVE…SNKADGNGKN (475 aa). Composition is skewed to basic and acidic residues over residues 112–126 and 179–193; these read TVKEEVVKEEEKPQV and DVAEAKEASDVTEVK. The tract at residues 194–511 is fibrinogen/elastin/tropoelastin-binding; sequence GTDVTSKVTV…SNKADGNGKN (318 aa). The segment at 512–834 is fibronectin-binding; that stretch reads GQIIQNNDFE…EGQQTIEEDT (323 aa). A B-1 repeat occupies 545-574; the sequence is ENQDNTPLDIDYHTAIDGEGGYADGYIETI. The interval 545 to 604 is 2 X approximate tandem repeats; that stretch reads ENQDNTPLDIDYHTAIDGEGGYADGYIETIEETDSSAIDIDYHTAVDSEAGHVGGYTESS. One copy of the B-2 repeat lies at 575 to 604; it reads EETDSSAIDIDYHTAVDSEAGHVGGYTESS. A disordered region spans residues 702-969; sequence LGYEGGQNSG…EESTNKGMLF (268 aa). Residues 707 to 744 form a D-1 repeat; the sequence is GQNSGNQSFEEDTEEDKPKYEQGGNIVDIDFDSVPQIQ. A 4 X approximate tandem repeats region spans residues 707–850; sequence GQNSGNQSFE…TPEVPSEPET (144 aa). Over residues 741–752 the composition is skewed to polar residues; the sequence is PQIQGQNNGNQS. Residues 745–782 form a D-2 repeat; sequence GQNNGNQSFEEDTEKDKPKYEQGGNIIDIDFDSVPQIH. Residues 783-821 form a D-3 repeat; the sequence is GFNKHNEIIEEDTNKDKPNYQFGGHNSVDFEEDTLPKVS. A compositionally biased stretch (basic and acidic residues) spans 786–800; the sequence is KHNEIIEEDTNKDKP. The stretch at 822–850 is one D-4; truncated repeat; it reads GQNEGQQTIEEDTTPPTPPTPEVPSEPET. Positions 836 to 910 are enriched in pro residues; the sequence is PPTPPTPEVP…PAEPGKPVPP (75 aa). 5 WR repeats span residues 851 to 864, 865 to 878, 879 to 892, 893 to 906, and 907 to 920; these read PTPPTPEVPSEPET, PTPPTPEVPAEPGK, and PVPPAEEEPKKPSK. A 5 X tandem repeats, Pro-rich (WR) region spans residues 851-920; that stretch reads PTPPTPEVPS…AEEEPKKPSK (70 aa). The LPXTG sorting signal signature appears at 954-958; the sequence is LPETG. Residue threonine 957 is modified to Pentaglycyl murein peptidoglycan amidated threonine. Positions 958-990 are cleaved as a propeptide — removed by sortase; the sequence is GGEESTNKGMLFGGLFSILGLALLRRNKKNHKA.

It localises to the secreted. Its subcellular location is the cell wall. In terms of biological role, promotes bacterial attachment to multiple substrates, such as fibronectin (Fn), fibrinogen (Fg), elastin peptides and tropoelastin. This confers to S.aureus the ability to invade endothelial cells. Promotes adherence to and aggregation of activated platelets. The chain is Fibronectin-binding protein A (fnbA) from Staphylococcus aureus (strain bovine RF122 / ET3-1).